The sequence spans 253 residues: DNA repair protein RecO (253 aa).

This sequence belongs to the RecO family.

Functionally, involved in DNA repair and RecF pathway recombination. The sequence is that of DNA repair protein RecO from Streptococcus agalactiae serotype Ia (strain ATCC 27591 / A909 / CDC SS700).